The chain runs to 254 residues: Decaprenylphosphoryl-2-keto-beta-D-erythro-pentose reductase (254 aa).

Residue aspartate 67 participates in NAD(+) binding. The active-site Proton acceptor is the tyrosine 160. Lysine 164 provides a ligand contact to NAD(+).

Belongs to the short-chain dehydrogenases/reductases (SDR) family. As to quaternary structure, interacts with DprE1 to form an epimerase complex.

Its subcellular location is the periplasm. It catalyses the reaction trans,octa-cis-decaprenylphospho-beta-D-arabinofuranose + NAD(+) = trans,octa-cis-decaprenylphospho-beta-D-erythro-pentofuranosid-2-ulose + NADH + H(+). Its pathway is cell wall biogenesis; cell wall polysaccharide biosynthesis. In terms of biological role, component of the DprE1-DprE2 complex that catalyzes the 2-step epimerization of decaprenyl-phospho-ribose (DPR) to decaprenyl-phospho-arabinose (DPA), a key precursor that serves as the arabinose donor required for the synthesis of cell-wall arabinans. DprE1 catalyzes the first step of epimerization, namely FAD-dependent oxidation of the C2' hydroxyl of DPR to yield the keto intermediate decaprenyl-phospho-2'-keto-D-arabinose (DPX). The intermediate DPX is then transferred to DprE2 subunit of the epimerase complex, most probably through a 'substrate channel' at the interface of DprE1-DprE2 complex. DprE2 then catalyzes the second step of epimerization, the NAD(+)-dependent reduction of DPX that leads to the formation of DPA. This is Decaprenylphosphoryl-2-keto-beta-D-erythro-pentose reductase from Mycobacterium bovis (strain ATCC BAA-935 / AF2122/97).